We begin with the raw amino-acid sequence, 935 residues long: 2-oxoglutarate dehydrogenase E1 component (935 aa).

Belongs to the alpha-ketoglutarate dehydrogenase family. As to quaternary structure, homodimer. Part of the 2-oxoglutarate dehydrogenase (OGDH) complex composed of E1 (2-oxoglutarate dehydrogenase), E2 (dihydrolipoamide succinyltransferase) and E3 (dihydrolipoamide dehydrogenase); the complex contains multiple copies of the three enzymatic components (E1, E2 and E3). Thiamine diphosphate is required as a cofactor.

The enzyme catalyses N(6)-[(R)-lipoyl]-L-lysyl-[protein] + 2-oxoglutarate + H(+) = N(6)-[(R)-S(8)-succinyldihydrolipoyl]-L-lysyl-[protein] + CO2. Its function is as follows. E1 component of the 2-oxoglutarate dehydrogenase (OGDH) complex which catalyzes the decarboxylation of 2-oxoglutarate, the first step in the conversion of 2-oxoglutarate to succinyl-CoA and CO(2). The chain is 2-oxoglutarate dehydrogenase E1 component (sucA) from Haemophilus influenzae (strain ATCC 51907 / DSM 11121 / KW20 / Rd).